Here is a 132-residue protein sequence, read N- to C-terminus: Large ribosomal subunit protein uL14 (132 aa).

The protein belongs to the universal ribosomal protein uL14 family. Part of the 50S ribosomal subunit. Forms a cluster with proteins L3 and L24e, part of which may contact the 16S rRNA in 2 intersubunit bridges.

Functionally, binds to 23S rRNA. Forms part of two intersubunit bridges in the 70S ribosome. The protein is Large ribosomal subunit protein uL14 of Methanococcus maripaludis (strain DSM 14266 / JCM 13030 / NBRC 101832 / S2 / LL).